Reading from the N-terminus, the 1021-residue chain is Sodium/potassium-transporting ATPase subunit alpha-1 (1021 aa).

A propeptide spanning residues 1–5 is cleaved from the precursor; sequence MGKGV. The span at 1-11 shows a compositional bias: basic and acidic residues; the sequence is MGKGVGRDKYE. The segment at 1–37 is disordered; sequence MGKGVGRDKYEPAAVSEHGDKKKAKKERDMDELKKEV. The Cytoplasmic portion of the chain corresponds to 6–85; it reads GRDKYEPAAV…NALTPPPTTP (80 aa). K9 bears the N6-acetyllysine mark. Residue Y10 is modified to Phosphotyrosine. Position 16 is a phosphoserine; by PKC (S16). An N6-acetyllysine modification is found at K21. Residues 26 to 37 show a composition bias toward basic and acidic residues; it reads KERDMDELKKEV. Phosphoserine occurs at positions 38 and 45. Residues 80–82 form a phosphoinositide-3 kinase binding region; the sequence is PPP. The chain crosses the membrane as a helical span at residues 86-106; it reads EWVKFCRQLFGGFSMLLWIGA. Residues 107–129 are Extracellular-facing; sequence ILCFLAYGIQAATEEEPQNDNLY. The helical transmembrane segment at 130 to 150 threads the bilayer; that stretch reads LGVVLSAVVIITGCFSYYQEA. Over 151–286 the chain is Cytoplasmic; the sequence is KSSKIMESFK…GGQTPIAAEI (136 aa). A disordered region spans residues 214 to 233; that stretch reads SSLTGESEPQTRSPDFTNEN. A Phosphoserine modification is found at S226. Residue Y258 is modified to Phosphotyrosine. Residues 287 to 306 traverse the membrane as a helical segment; that stretch reads EHFIHIITGVAVFLGVSFFI. At 307–318 the chain is on the extracellular side; the sequence is LSLILEYTWLEA. The helical transmembrane segment at 319-336 threads the bilayer; that stretch reads VIFLIGIIVANVPEGLLA. Over 337 to 770 the chain is Cytoplasmic; the sequence is TVTVCLTLTA…EEGRLIFDNL (434 aa). Catalysis depends on D374, which acts as the 4-aspartylphosphate intermediate. Phosphoserine is present on residues S450 and S482. K485 serves as a coordination point for ATP. Residue Y540 is modified to Phosphotyrosine. Positions 594 to 715 are mediates interaction with SCN7A; sequence RAAVPDAVGK…QGAIVAVTGD (122 aa). K659 is subject to N6-succinyllysine. Phosphoserine is present on residues S666 and S673. The Mg(2+) site is built by D715 and D719. Residues 771–790 traverse the membrane as a helical segment; that stretch reads KKSIAYTLTSNIPEITPFLI. Topologically, residues 791-800 are extracellular; it reads FIIANIPLPL. Residues 801-821 traverse the membrane as a helical segment; it reads GTVTILCIDLGTDMVPAISLA. At 822–841 the chain is on the cytoplasmic side; it reads YEQAESDIMKRQPRNPKTDK. The helical transmembrane segment at 842–864 threads the bilayer; sequence LVNEQLISMAYGQIGMIQALGGF. At 865–916 the chain is on the extracellular side; sequence FTYFVILAENGFLPIHLLGLRVNWDDRWINDVEDSYGQQWTYEQRKIVEFTC. The helical transmembrane segment at 917–936 threads the bilayer; the sequence is HTPFFVTIVVVQWADLVICK. Over 937–949 the chain is Cytoplasmic; that stretch reads TRRNSVFQQGMKN. Position 941 is a phosphoserine; by PKA (S941). Residues 950–968 form a helical membrane-spanning segment; that stretch reads KILIFGLFEETALAAFLSY. The Extracellular segment spans residues 969 to 983; the sequence is CPGMGVALRMYPLKP. Residues 984 to 1004 traverse the membrane as a helical segment; that stretch reads TWWFCAFPYSLLIFVYDEVRK. Topologically, residues 1005–1021 are cytoplasmic; it reads LIIRRRPGGWVEKETYY.

It belongs to the cation transport ATPase (P-type) (TC 3.A.3) family. Type IIC subfamily. In terms of assembly, the sodium/potassium-transporting ATPase is composed of a catalytic alpha subunit, an auxiliary non-catalytic beta subunit and an additional regulatory subunit. Interacts with regulatory subunit FXYD1. Interacts with regulatory subunit FXYD3. Interacts with SIK1. Interacts with SLC35G1 and STIM1. Interacts with CLN3; this interaction regulates the sodium/potassium-transporting ATPase complex localization at the plasma membrane. Interacts with SCN7A; activates ATP1A1 P-type sodium:potassium-exchanging transporter activity which indirectly signals to nearby neurons to regulate sodium homeostasis. Phosphorylation on Tyr-10 modulates pumping activity. Phosphorylation of Ser-941 by PKA modulates the response of ATP1A1 to PKC. Dephosphorylation by protein phosphatase 2A (PP2A) following increases in intracellular sodium, leading to increase catalytic activity.

It localises to the cell membrane. It is found in the basolateral cell membrane. Its subcellular location is the sarcolemma. The protein resides in the cell projection. The protein localises to the axon. It localises to the melanosome. The enzyme catalyses K(+)(out) + Na(+)(in) + ATP + H2O = K(+)(in) + Na(+)(out) + ADP + phosphate + H(+). Its function is as follows. This is the catalytic component of the active enzyme, which catalyzes the hydrolysis of ATP coupled with the exchange of sodium and potassium ions across the plasma membrane. This action creates the electrochemical gradient of sodium and potassium ions, providing the energy for active transport of various nutrients. Could also be part of an osmosensory signaling pathway that senses body-fluid sodium levels and controls salt intake behavior as well as voluntary water intake to regulate sodium homeostasis. In Sus scrofa (Pig), this protein is Sodium/potassium-transporting ATPase subunit alpha-1 (ATP1A1).